A 234-amino-acid polypeptide reads, in one-letter code: Small ribosomal subunit protein uS3 (234 aa).

The KH type-2 domain occupies 39-107 (IRKFLKKELY…EVSINIKEVK (69 aa)).

Belongs to the universal ribosomal protein uS3 family. As to quaternary structure, part of the 30S ribosomal subunit. Forms a tight complex with proteins S10 and S14.

Its function is as follows. Binds the lower part of the 30S subunit head. Binds mRNA in the 70S ribosome, positioning it for translation. In Helicobacter pylori (strain P12), this protein is Small ribosomal subunit protein uS3.